The primary structure comprises 921 residues: Probable dipeptidyl-aminopeptidase B (921 aa).

The interval 1–33 (MAGHTEENAQLLSTEQESVSRHSSDSAASTAST) is disordered. At 1–109 (MAGHTEENAQ…NKSVDKKLRK (109 aa)) the chain is on the cytoplasmic side. Residues 8-17 (NAQLLSTEQE) show a composition bias toward polar residues. The chain crosses the membrane as a helical; Signal-anchor for type II membrane protein span at residues 110-130 (LIWIVGGVFIGAWVLALFIFL). The Vacuolar segment spans residues 131-921 (GKQAYKHSSE…VPLQIDAAKV (791 aa)). N-linked (GlcNAc...) asparagine glycosylation is present at N362. S768 (charge relay system) is an active-site residue. N822 carries an N-linked (GlcNAc...) asparagine glycan. Active-site charge relay system residues include D845 and H878.

Belongs to the peptidase S9B family.

It is found in the vacuole membrane. It catalyses the reaction Release of an N-terminal dipeptide, Xaa-Yaa-|-Zaa-, from a polypeptide, preferentially when Yaa is Pro, provided Zaa is neither Pro nor hydroxyproline.. Type IV dipeptidyl-peptidase which removes N-terminal dipeptides sequentially from polypeptides having unsubstituted N-termini provided that the penultimate residue is proline. This Sclerotinia sclerotiorum (strain ATCC 18683 / 1980 / Ss-1) (White mold) protein is Probable dipeptidyl-aminopeptidase B (dapB).